Reading from the N-terminus, the 112-residue chain is MMWHLVVQLGVFQEPARQARDQMHNFSLIMEMKITSLKILFGMRAEIILYSWKMKTLESTRTHSFIFFILFLFIFIFLTFSHNNSNSNKITSNIHTHINRHIFYFVLSYSEW.

Residues 62 to 82 (THSFIFFILFLFIFIFLTFSH) form a helical membrane-spanning segment.

It is found in the membrane. This is an uncharacterized protein from Saccharomyces cerevisiae (strain ATCC 204508 / S288c) (Baker's yeast).